Reading from the N-terminus, the 112-residue chain is DIVLTQSPASLAVSLGQRATISCRASESVDNYGISFMNWFQQKPGQPPKLLIYAASNQGSGVPARFSGSGSGTDFSLNIHPMEEDDTAMYFCQQSKEVPPYTFGGGTKLEIK.

Residues 1 to 23 form a framework-1 region; sequence DIVLTQSPASLAVSLGQRATISC. A disulfide bond links C23 and C92. Residues 24–38 form a complementarity-determining-1 region; it reads RASESVDNYGISFMN. Residues 39 to 53 are framework-2; it reads WFQQKPGQPPKLLIY. Residues 54 to 60 are complementarity-determining-2; it reads AASNQGS. Positions 61-92 are framework-3; the sequence is GVPARFSGSGSGTDFSLNIHPMEEDDTAMYFC. The complementarity-determining-3 stretch occupies residues 93–102; it reads QQSKEVPPYT. Positions 103-112 are framework-4; sequence FGGGTKLEIK.

This is Ig kappa chain V-III region PC 7132 from Mus musculus (Mouse).